The chain runs to 635 residues: Threonine--tRNA ligase (635 aa).

A TGS domain is found at Met-1 to Thr-61. Residues Asp-242–Pro-532 form a catalytic region. Positions 333, 384, and 509 each coordinate Zn(2+).

Belongs to the class-II aminoacyl-tRNA synthetase family. Homodimer. It depends on Zn(2+) as a cofactor.

It localises to the cytoplasm. The catalysed reaction is tRNA(Thr) + L-threonine + ATP = L-threonyl-tRNA(Thr) + AMP + diphosphate + H(+). Its function is as follows. Catalyzes the attachment of threonine to tRNA(Thr) in a two-step reaction: L-threonine is first activated by ATP to form Thr-AMP and then transferred to the acceptor end of tRNA(Thr). Also edits incorrectly charged L-seryl-tRNA(Thr). This Clostridium botulinum (strain Kyoto / Type A2) protein is Threonine--tRNA ligase.